We begin with the raw amino-acid sequence, 95 residues long: MGLERDEILSQDLHFNEVFISLWQNRLTRYEIARVISARALQLAMGAPALIDINNLSSTDVISIAEEEFRRGVLPITIRRRLPNGKIILLSLRKS.

The protein belongs to the archaeal Rpo6/eukaryotic RPB6 RNA polymerase subunit family. In terms of assembly, part of the 13-subunit RNA polymerase complex.

It localises to the cytoplasm. It carries out the reaction RNA(n) + a ribonucleoside 5'-triphosphate = RNA(n+1) + diphosphate. Its function is as follows. DNA-dependent RNA polymerase (RNAP) catalyzes the transcription of DNA into RNA using the four ribonucleoside triphosphates as substrates. The sequence is that of DNA-directed RNA polymerase subunit Rpo6 from Saccharolobus solfataricus (strain ATCC 35092 / DSM 1617 / JCM 11322 / P2) (Sulfolobus solfataricus).